A 349-amino-acid polypeptide reads, in one-letter code: Protein pelota homolog (349 aa).

Belongs to the eukaryotic release factor 1 family. Pelota subfamily. Monomer. A divalent metal cation serves as cofactor.

It localises to the cytoplasm. Functionally, may function in recognizing stalled ribosomes, interact with stem-loop structures in stalled mRNA molecules, and effect endonucleolytic cleavage of the mRNA. May play a role in the release non-functional ribosomes and degradation of damaged mRNAs. Has endoribonuclease activity. The protein is Protein pelota homolog of Nitrosopumilus maritimus (strain SCM1).